A 267-amino-acid polypeptide reads, in one-letter code: uncharacterized protein (267 aa).

Positions 37-62 form a coiled coil; that stretch reads DSSNNYKKKYKKYKRKYIDLKKQLNY.

This is an uncharacterized protein from Acanthamoeba polyphaga (Amoeba).